Reading from the N-terminus, the 331-residue chain is Fructose-1,6-bisphosphatase class 1 (331 aa).

Residues Glu80, Asp98, Leu100, and Asp101 each coordinate Mg(2+). Residues 101-104 and Asn189 each bind substrate; that span reads DGSS. Glu261 is a binding site for Mg(2+).

Belongs to the FBPase class 1 family. As to quaternary structure, homotetramer. It depends on Mg(2+) as a cofactor.

Its subcellular location is the cytoplasm. The catalysed reaction is beta-D-fructose 1,6-bisphosphate + H2O = beta-D-fructose 6-phosphate + phosphate. The protein operates within carbohydrate biosynthesis; gluconeogenesis. The sequence is that of Fructose-1,6-bisphosphatase class 1 from Rhodobacter capsulatus (strain ATCC BAA-309 / NBRC 16581 / SB1003).